Reading from the N-terminus, the 408-residue chain is Putative mannan endo-1,4-beta-mannosidase P (408 aa).

Positions 1 to 23 (MKCLCFIVLLAIVIAQSYVGVEA) are cleaved as a signal peptide. Residue Asn-73 is glycosylated (N-linked (GlcNAc...) asparagine). Trp-85 and Asn-201 together coordinate substrate. Catalysis depends on Glu-202, which acts as the Proton donor. Glu-322 functions as the Nucleophile in the catalytic mechanism. Trp-364 contacts substrate.

Belongs to the glycosyl hydrolase 5 (cellulase A) family.

The protein localises to the secreted. The enzyme catalyses Random hydrolysis of (1-&gt;4)-beta-D-mannosidic linkages in mannans, galactomannans and glucomannans.. The chain is Putative mannan endo-1,4-beta-mannosidase P (MANP) from Arabidopsis thaliana (Mouse-ear cress).